The following is a 463-amino-acid chain: UDP-N-acetylmuramoylalanine--D-glutamate ligase (463 aa).

ATP is bound at residue 126 to 132 (GSNGKST).

This sequence belongs to the MurCDEF family.

The protein localises to the cytoplasm. The catalysed reaction is UDP-N-acetyl-alpha-D-muramoyl-L-alanine + D-glutamate + ATP = UDP-N-acetyl-alpha-D-muramoyl-L-alanyl-D-glutamate + ADP + phosphate + H(+). Its pathway is cell wall biogenesis; peptidoglycan biosynthesis. Cell wall formation. Catalyzes the addition of glutamate to the nucleotide precursor UDP-N-acetylmuramoyl-L-alanine (UMA). The sequence is that of UDP-N-acetylmuramoylalanine--D-glutamate ligase from Idiomarina loihiensis (strain ATCC BAA-735 / DSM 15497 / L2-TR).